A 423-amino-acid polypeptide reads, in one-letter code: SH2 domain-containing protein 5 (423 aa).

Residues 28–146 (AQYVGLLPCG…LLCRSFQLAY (119 aa)) form the PID domain. The region spanning 296 to 392 (WAFAGISRPC…LDMGRLNPTY (97 aa)) is the SH2 domain. The segment at 394–423 (EQDCGPLGRPPRTLRPLSHAKSEAELQGLG) is disordered. Low complexity predominate over residues 398-410 (GPLGRPPRTLRPL).

As to quaternary structure, interacts with BCR.

It is found in the postsynaptic density. Functionally, may be involved in synaptic plasticity regulation through the control of Rac-GTP levels. This is SH2 domain-containing protein 5 from Pongo abelii (Sumatran orangutan).